Consider the following 131-residue polypeptide: MVKKFEYRGKPAEELESMPLDSLFRLFNSRQRRSLTRGITDGKRKLIREIKDARAGKEGNPIKTHLRDLIVLPSMTGVTVNVFSGKEFRPVEITTEMIGHYLGEYVITNKRVSHGAPGVGASRSSLYVPLK.

It belongs to the universal ribosomal protein uS19 family.

In terms of biological role, protein S19 forms a complex with S13 that binds strongly to the 16S ribosomal RNA. The chain is Small ribosomal subunit protein uS19 from Cenarchaeum symbiosum (strain A).